Reading from the N-terminus, the 406-residue chain is Succinyl-diaminopimelate desuccinylase (406 aa).

His-95 serves as a coordination point for Zn(2+). The active site involves Asp-97. Asp-128 is a Zn(2+) binding site. Glu-162 serves as the catalytic Proton acceptor. 3 residues coordinate Zn(2+): Glu-163, Glu-191, and His-377.

The protein belongs to the peptidase M20A family. DapE subfamily. Homodimer. Zn(2+) serves as cofactor. Co(2+) is required as a cofactor.

It carries out the reaction N-succinyl-(2S,6S)-2,6-diaminopimelate + H2O = (2S,6S)-2,6-diaminopimelate + succinate. The protein operates within amino-acid biosynthesis; L-lysine biosynthesis via DAP pathway; LL-2,6-diaminopimelate from (S)-tetrahydrodipicolinate (succinylase route): step 3/3. In terms of biological role, catalyzes the hydrolysis of N-succinyl-L,L-diaminopimelic acid (SDAP), forming succinate and LL-2,6-diaminopimelate (DAP), an intermediate involved in the bacterial biosynthesis of lysine and meso-diaminopimelic acid, an essential component of bacterial cell walls. This chain is Succinyl-diaminopimelate desuccinylase, found in Polaromonas naphthalenivorans (strain CJ2).